A 388-amino-acid chain; its full sequence is S-adenosylmethionine synthase 1 (388 aa).

E11 is a binding site for Mg(2+). H17 contributes to the ATP binding site. Residue E45 coordinates K(+). L-methionine contacts are provided by E58 and Q101. ATP-binding positions include 168 to 170 (DAK), 233 to 236 (SGRF), D244, 250 to 251 (RK), A267, K271, and K275. An L-methionine-binding site is contributed by D244. Position 275 (K275) interacts with L-methionine.

Belongs to the AdoMet synthase family. Homotetramer. Mn(2+) serves as cofactor. Mg(2+) is required as a cofactor. It depends on Co(2+) as a cofactor. The cofactor is K(+). Mostly in Roots.

The protein localises to the cytoplasm. It carries out the reaction L-methionine + ATP + H2O = S-adenosyl-L-methionine + phosphate + diphosphate. The protein operates within amino-acid biosynthesis; S-adenosyl-L-methionine biosynthesis; S-adenosyl-L-methionine from L-methionine: step 1/1. In terms of biological role, catalyzes the formation of S-adenosylmethionine from methionine and ATP. The reaction comprises two steps that are both catalyzed by the same enzyme: formation of S-adenosylmethionine (AdoMet) and triphosphate, and subsequent hydrolysis of the triphosphate. In Pinus contorta (Shore pine), this protein is S-adenosylmethionine synthase 1 (SAMS1).